A 603-amino-acid polypeptide reads, in one-letter code: Glutamyl-tRNA(Gln) amidotransferase subunit B, mitochondrial (603 aa).

2 disordered regions span residues 38 to 61 (RGRD…SNGA) and 72 to 91 (EQAR…PPEH). Residues 42–58 (WSSTSRRAIDTQTSGAS) are compositionally biased toward polar residues.

This sequence belongs to the GatB/GatE family. GatB subfamily. As to quaternary structure, subunit of the heterotrimeric GatCAB amidotransferase (AdT) complex, composed of A, B and C subunits.

It is found in the mitochondrion. The catalysed reaction is L-glutamyl-tRNA(Gln) + L-glutamine + ATP + H2O = L-glutaminyl-tRNA(Gln) + L-glutamate + ADP + phosphate + H(+). Allows the formation of correctly charged Gln-tRNA(Gln) through the transamidation of misacylated Glu-tRNA(Gln) in the mitochondria. The reaction takes place in the presence of glutamine and ATP through an activated gamma-phospho-Glu-tRNA(Gln). In Paracoccidioides brasiliensis (strain Pb18), this protein is Glutamyl-tRNA(Gln) amidotransferase subunit B, mitochondrial.